The sequence spans 260 residues: Putative ABC transporter ATP-binding protein PYRAB01300 (260 aa).

Residues 2–234 form the ABC transporter domain; the sequence is IEFKDVWFWY…DLRNFSLVEP (233 aa). 34–41 is an ATP binding site; sequence GPNGSGKT.

It belongs to the ABC transporter superfamily.

It is found in the cell membrane. In terms of biological role, probably part of an ABC transporter complex. Responsible for energy coupling to the transport system. The polypeptide is Putative ABC transporter ATP-binding protein PYRAB01300 (Pyrococcus abyssi (strain GE5 / Orsay)).